A 466-amino-acid chain; its full sequence is MTTTFPTVEFSAELLNKYNQGIPRYTSYPPATELNKEFDPSDFQTAINLGNYKKTPLSLYCHIPFCAKACYFCGCNTIITQHKPAVDPYLKAVAKQIALVAPLVDQQRPVQQLHWGGGTPNYLTLEQAEFLFNTITDAFPLAENAEISIEINPCYVDKDYIFALRQLGFNRISFGIQDFNSQVQQAVNRIQPEAMLFQVMDWIRQANFDSVNVDLIYGLPHQNLATFRETLRKTAQLNPDRIAVFNFAYVPWLKPVQKKMPESALPPAEEKLKIMQATIADLTEQGYVFIGMDHFAKPDDELAIAQRRGELHRNFQGYTTQPESDLLGFGITSISMLQDVYAQNHKTLKAFYNALDREVMPIEKGFKLSQDDLIRRTVIKELMCQFKLSAQELESKYNLGFDCDFNDYFAKELSALDVLEADGLLRRLGDGLEVTPRGRILIRNIAAVFDTYLQNKSKQQMFSRAI.

Positions 51–285 (NYKKTPLSLY…QATIADLTEQ (235 aa)) constitute a Radical SAM core domain. S-adenosyl-L-methionine is bound at residue Tyr60. Cys66 and Cys70 together coordinate [4Fe-4S] cluster. An S-adenosyl-L-methionine-binding site is contributed by Phe72. A [4Fe-4S] cluster-binding site is contributed by Cys73. S-adenosyl-L-methionine contacts are provided by residues Gly117, 118–119 (GT), Glu150, Gln177, Arg189, Asp214, Ala248, and Ile334.

It belongs to the anaerobic coproporphyrinogen-III oxidase family. As to quaternary structure, monomer. The cofactor is [4Fe-4S] cluster.

It localises to the cytoplasm. It carries out the reaction coproporphyrinogen III + 2 S-adenosyl-L-methionine = protoporphyrinogen IX + 2 5'-deoxyadenosine + 2 L-methionine + 2 CO2. The protein operates within porphyrin-containing compound metabolism; protoporphyrin-IX biosynthesis; protoporphyrinogen-IX from coproporphyrinogen-III (AdoMet route): step 1/1. Its function is as follows. Involved in the heme and chlorophyll biosynthesis. Catalyzes the anaerobic oxidative decarboxylation of propionate groups of rings A and B of coproporphyrinogen III to yield the vinyl groups in protoporphyrinogen IX. The sequence is that of Oxygen-independent coproporphyrinogen III oxidase (hemN) from Synechocystis sp. (strain ATCC 27184 / PCC 6803 / Kazusa).